A 447-amino-acid chain; its full sequence is Phosphoglucosamine mutase (447 aa).

Ser-105 serves as the catalytic Phosphoserine intermediate. Mg(2+) is bound by residues Ser-105, Asp-244, Asp-246, and Asp-248. Ser-105 carries the phosphoserine modification.

Belongs to the phosphohexose mutase family. Requires Mg(2+) as cofactor. Post-translationally, activated by phosphorylation.

The catalysed reaction is alpha-D-glucosamine 1-phosphate = D-glucosamine 6-phosphate. Functionally, catalyzes the conversion of glucosamine-6-phosphate to glucosamine-1-phosphate. This chain is Phosphoglucosamine mutase, found in Polynucleobacter asymbioticus (strain DSM 18221 / CIP 109841 / QLW-P1DMWA-1) (Polynucleobacter necessarius subsp. asymbioticus).